Reading from the N-terminus, the 248-residue chain is 4-hydroxy-tetrahydrodipicolinate reductase (248 aa).

Residues 9 to 14, 77 to 79, and 104 to 107 contribute to the NAD(+) site; these read GAKGRV, GTT, and APNF. His-134 acts as the Proton donor/acceptor in catalysis. His-135 provides a ligand contact to (S)-2,3,4,5-tetrahydrodipicolinate. The active-site Proton donor is the Lys-138. 144–145 is a (S)-2,3,4,5-tetrahydrodipicolinate binding site; the sequence is GT.

Belongs to the DapB family.

Its subcellular location is the cytoplasm. The enzyme catalyses (S)-2,3,4,5-tetrahydrodipicolinate + NAD(+) + H2O = (2S,4S)-4-hydroxy-2,3,4,5-tetrahydrodipicolinate + NADH + H(+). It carries out the reaction (S)-2,3,4,5-tetrahydrodipicolinate + NADP(+) + H2O = (2S,4S)-4-hydroxy-2,3,4,5-tetrahydrodipicolinate + NADPH + H(+). It functions in the pathway amino-acid biosynthesis; L-lysine biosynthesis via DAP pathway; (S)-tetrahydrodipicolinate from L-aspartate: step 4/4. In terms of biological role, catalyzes the conversion of 4-hydroxy-tetrahydrodipicolinate (HTPA) to tetrahydrodipicolinate. The chain is 4-hydroxy-tetrahydrodipicolinate reductase from Corynebacterium aurimucosum (strain ATCC 700975 / DSM 44827 / CIP 107346 / CN-1) (Corynebacterium nigricans).